The primary structure comprises 201 residues: Molybdenum cofactor guanylyltransferase (201 aa).

GTP is bound by residues 15 to 17 (LCG), Lys28, Asp74, and Asp104. Asp104 provides a ligand contact to Mg(2+).

It belongs to the MobA family. As to quaternary structure, monomer. Requires Mg(2+) as cofactor.

It is found in the cytoplasm. The enzyme catalyses Mo-molybdopterin + GTP + H(+) = Mo-molybdopterin guanine dinucleotide + diphosphate. Functionally, transfers a GMP moiety from GTP to Mo-molybdopterin (Mo-MPT) cofactor (Moco or molybdenum cofactor) to form Mo-molybdopterin guanine dinucleotide (Mo-MGD) cofactor. This is Molybdenum cofactor guanylyltransferase from Ectopseudomonas mendocina (strain ymp) (Pseudomonas mendocina).